The primary structure comprises 141 residues: MLERTLSILKPDVVKRNITGQVNSYIENSGLKIVTQKMCLLTRFQAEEFYAIHKSQHFFIPLVDFMVSGPIIVQVLEGENAISLYRELMGATDPKKANPGTIRGDFAENIDANCVHGSDSLDNAVREIRFFFSDYELLSLK.

Positions 10, 58, 86, 92, 103, and 113 each coordinate ATP. Histidine 116 functions as the Pros-phosphohistidine intermediate in the catalytic mechanism.

The protein belongs to the NDK family. As to quaternary structure, homotetramer. The cofactor is Mg(2+).

The protein resides in the cytoplasm. The enzyme catalyses a 2'-deoxyribonucleoside 5'-diphosphate + ATP = a 2'-deoxyribonucleoside 5'-triphosphate + ADP. The catalysed reaction is a ribonucleoside 5'-diphosphate + ATP = a ribonucleoside 5'-triphosphate + ADP. In terms of biological role, major role in the synthesis of nucleoside triphosphates other than ATP. The ATP gamma phosphate is transferred to the NDP beta phosphate via a ping-pong mechanism, using a phosphorylated active-site intermediate. This is Nucleoside diphosphate kinase from Ehrlichia canis (strain Jake).